Consider the following 303-residue polypeptide: Suppressor of silencing P0 (303 aa).

The protein belongs to the polerovirus P0 protein family.

Its function is as follows. Suppressor of RNA-mediated gene silencing. This is Suppressor of silencing P0 from Pea enation mosaic virus-1 (strain WSG) (PEMV-1).